The chain runs to 498 residues: Guanosine-5'-triphosphate,3'-diphosphate pyrophosphatase (498 aa).

It belongs to the GppA/Ppx family. GppA subfamily.

The enzyme catalyses guanosine 3'-diphosphate 5'-triphosphate + H2O = guanosine 3',5'-bis(diphosphate) + phosphate + H(+). It functions in the pathway purine metabolism; ppGpp biosynthesis; ppGpp from GTP: step 2/2. In terms of biological role, catalyzes the conversion of pppGpp to ppGpp. Guanosine pentaphosphate (pppGpp) is a cytoplasmic signaling molecule which together with ppGpp controls the 'stringent response', an adaptive process that allows bacteria to respond to amino acid starvation, resulting in the coordinated regulation of numerous cellular activities. The protein is Guanosine-5'-triphosphate,3'-diphosphate pyrophosphatase of Yersinia pseudotuberculosis serotype O:1b (strain IP 31758).